The sequence spans 90 residues: Co-chaperonin GroES (90 aa).

The protein belongs to the GroES chaperonin family. In terms of assembly, heptamer of 7 subunits arranged in a ring. Interacts with the chaperonin GroEL.

The protein localises to the cytoplasm. Its function is as follows. Together with the chaperonin GroEL, plays an essential role in assisting protein folding. The GroEL-GroES system forms a nano-cage that allows encapsulation of the non-native substrate proteins and provides a physical environment optimized to promote and accelerate protein folding. GroES binds to the apical surface of the GroEL ring, thereby capping the opening of the GroEL channel. The polypeptide is Co-chaperonin GroES (Phocaeicola vulgatus (strain ATCC 8482 / DSM 1447 / JCM 5826 / CCUG 4940 / NBRC 14291 / NCTC 11154) (Bacteroides vulgatus)).